The sequence spans 168 residues: Lipoprotein signal peptidase (168 aa).

3 consecutive transmembrane segments (helical) span residues 8 to 28 (LYYL…WLVV), 61 to 81 (GQFW…VIYI), and 91 to 111 (FGIA…DRIF). Catalysis depends on residues aspartate 117 and aspartate 135. A helical transmembrane segment spans residues 128 to 148 (FPIFNVADAALTIGVALMFIY).

This sequence belongs to the peptidase A8 family.

The protein localises to the cell membrane. The catalysed reaction is Release of signal peptides from bacterial membrane prolipoproteins. Hydrolyzes -Xaa-Yaa-Zaa-|-(S,diacylglyceryl)Cys-, in which Xaa is hydrophobic (preferably Leu), and Yaa (Ala or Ser) and Zaa (Gly or Ala) have small, neutral side chains.. Its pathway is protein modification; lipoprotein biosynthesis (signal peptide cleavage). Its function is as follows. This protein specifically catalyzes the removal of signal peptides from prolipoproteins. This chain is Lipoprotein signal peptidase, found in Anoxybacillus flavithermus (strain DSM 21510 / WK1).